The sequence spans 123 residues: Small ribosomal subunit protein uS12cz/uS12cy (123 aa).

Belongs to the universal ribosomal protein uS12 family. Part of the 30S ribosomal subunit.

The protein localises to the plastid. It is found in the chloroplast. Its function is as follows. With S4 and S5 plays an important role in translational accuracy. Located at the interface of the 30S and 50S subunits. This chain is Small ribosomal subunit protein uS12cz/uS12cy (rps12-A), found in Psilotum nudum (Whisk fern).